The following is a 104-amino-acid chain: DNA-directed RNA polymerase subunit omega (104 aa).

It belongs to the RNA polymerase subunit omega family. As to quaternary structure, the RNAP catalytic core consists of 2 alpha, 1 beta, 1 beta' and 1 omega subunit. When a sigma factor is associated with the core the holoenzyme is formed, which can initiate transcription.

The catalysed reaction is RNA(n) + a ribonucleoside 5'-triphosphate = RNA(n+1) + diphosphate. Its function is as follows. Promotes RNA polymerase assembly. Latches the N- and C-terminal regions of the beta' subunit thereby facilitating its interaction with the beta and alpha subunits. This chain is DNA-directed RNA polymerase subunit omega, found in Streptococcus agalactiae serotype Ia (strain ATCC 27591 / A909 / CDC SS700).